The primary structure comprises 323 residues: Cyclin-H (323 aa).

The residue at position 5 (Ser-5) is a Phosphoserine; by CDK8. Ser-132 is subject to Phosphoserine. Residues 295–323 form a disordered region; it reads KGYEDDDYVSKKPKQEEEEWTDDDLVDSL. Residue Ser-304 is modified to Phosphoserine; by CDK8. Residues 310-323 show a composition bias toward acidic residues; that stretch reads EEEEWTDDDLVDSL. Thr-315 is modified (phosphothreonine). Ser-322 is subject to Phosphoserine.

This sequence belongs to the cyclin family. Cyclin C subfamily. In terms of assembly, associates primarily with CDK7 and MAT1 to form the CAK complex. CAK can further associate with the core-TFIIH to form the TFIIH basal transcription factor. As to expression, expressed in both the germinal and somatic cells of the testis.

The protein resides in the nucleus. Regulates CDK7, the catalytic subunit of the CDK-activating kinase (CAK) enzymatic complex. CAK activates the cyclin-associated kinases CDK1, CDK2, CDK4 and CDK6 by threonine phosphorylation. CAK complexed to the core-TFIIH basal transcription factor activates RNA polymerase II by serine phosphorylation of the repetitive C-terminal domain (CTD) of its large subunit (POLR2A), allowing its escape from the promoter and elongation of the transcripts. Involved in cell cycle control and in RNA transcription by RNA polymerase II. Its expression and activity are constant throughout the cell cycle. This chain is Cyclin-H (Ccnh), found in Mus musculus (Mouse).